A 374-amino-acid chain; its full sequence is Probable quinol oxidase subunit 2 (374 aa).

An N-terminal signal peptide occupies residues 1-19 (MSKFKSLLLLFGTLILLSG). C20 carries N-palmitoyl cysteine lipidation. C20 carries S-diacylglycerol cysteine lipidation. 2 helical membrane-spanning segments follow: residues 43–63 (SIIF…IFIF) and 82–102 (IETI…IPTV). Residues 317–374 (ERHGMKPMILGNNEKYDNEFKKEEDHNSKEMEKISKGAKDENASKLHKKEHDDHGGGH) form a disordered region. A compositionally biased stretch (basic and acidic residues) spans 330-374 (EKYDNEFKKEEDHNSKEMEKISKGAKDENASKLHKKEHDDHGGGH).

It belongs to the cytochrome c oxidase subunit 2 family.

The protein resides in the cell membrane. The catalysed reaction is 2 a quinol + O2 = 2 a quinone + 2 H2O. Its function is as follows. Catalyzes quinol oxidation with the concomitant reduction of oxygen to water. Subunit II transfers the electrons from a quinol to the binuclear center of the catalytic subunit I. The sequence is that of Probable quinol oxidase subunit 2 (qoxA) from Staphylococcus epidermidis (strain ATCC 12228 / FDA PCI 1200).